The sequence spans 452 residues: MSSASYLTVKALTKYIKRKFDADPHLREVYVKGELSNVKIHQSGHIYFTLKDDGARIAATMFKAAATKLAFEPKEGMQVFIRGDVNVYEGYGTYQLYVQEMQPDGIGSLFVAFNQLKEQLQKEGLFKLDWKQSIPKFPEKIGVLTSTTGAAIRDICTTLKRRYPLAEILIYPTLVQGAQAAPNIVQNIQRANQDATCQVLIVGRGGGSIEDLWAFNEEIVARAIFESRIPIISAVGHETDTTIADYVSDLRAPTPTAAAEMAVPDQMELFQRVLSQKSQIHQMVRSQLMAERQRLNKLQQSYPLSMPERLYRPFTERLAQLESGLQTAMQVDLMKKSAQLQQLHSTVAQHSPKKALAFHQRELEARMQQLTRAATYYVAKQQQQFEATIRTLEALNPLSILTRGFTVAYKDQHMIKSSTEVQEQDYLTLAFHDGKVVAEVKDILPKNEGESL.

This sequence belongs to the XseA family. In terms of assembly, heterooligomer composed of large and small subunits.

The protein resides in the cytoplasm. The enzyme catalyses Exonucleolytic cleavage in either 5'- to 3'- or 3'- to 5'-direction to yield nucleoside 5'-phosphates.. Bidirectionally degrades single-stranded DNA into large acid-insoluble oligonucleotides, which are then degraded further into small acid-soluble oligonucleotides. This Lysinibacillus sphaericus (strain C3-41) protein is Exodeoxyribonuclease 7 large subunit.